Consider the following 229-residue polypeptide: 7-cyano-7-deazaguanine synthase (229 aa).

ATP is bound at residue 12 to 22; it reads LSGGMDSCVCA. Residues C194, C202, C205, and C208 each contribute to the Zn(2+) site.

It belongs to the QueC family. Zn(2+) serves as cofactor.

The catalysed reaction is 7-carboxy-7-deazaguanine + NH4(+) + ATP = 7-cyano-7-deazaguanine + ADP + phosphate + H2O + H(+). The protein operates within purine metabolism; 7-cyano-7-deazaguanine biosynthesis. Catalyzes the ATP-dependent conversion of 7-carboxy-7-deazaguanine (CDG) to 7-cyano-7-deazaguanine (preQ(0)). This Acidobacterium capsulatum (strain ATCC 51196 / DSM 11244 / BCRC 80197 / JCM 7670 / NBRC 15755 / NCIMB 13165 / 161) protein is 7-cyano-7-deazaguanine synthase.